Here is a 337-residue protein sequence, read N- to C-terminus: Glyceraldehyde-3-phosphate dehydrogenase (337 aa).

NAD(+) contacts are provided by residues 12–13 (RI), D34, and R79. D-glyceraldehyde 3-phosphate contacts are provided by residues 150–152 (SCT), T181, 210–211 (TG), and R233. C151 functions as the Nucleophile in the catalytic mechanism. NAD(+) is bound at residue N315.

The protein belongs to the glyceraldehyde-3-phosphate dehydrogenase family. In terms of assembly, homotetramer.

It is found in the cytoplasm. The catalysed reaction is D-glyceraldehyde 3-phosphate + phosphate + NAD(+) = (2R)-3-phospho-glyceroyl phosphate + NADH + H(+). It participates in carbohydrate degradation; glycolysis; pyruvate from D-glyceraldehyde 3-phosphate: step 1/5. This is Glyceraldehyde-3-phosphate dehydrogenase (GPD-1) from Claviceps purpurea (strain 20.1) (Ergot fungus).